The sequence spans 315 residues: Acetaldehyde dehydrogenase (315 aa).

Residue 13-16 coordinates NAD(+); it reads SGNI. The active-site Acyl-thioester intermediate is Cys143. NAD(+) is bound by residues 174–182 and Asn285; that span reads SAGPGTRKN.

Belongs to the acetaldehyde dehydrogenase family.

The catalysed reaction is acetaldehyde + NAD(+) + CoA = acetyl-CoA + NADH + H(+). This chain is Acetaldehyde dehydrogenase, found in Shewanella woodyi (strain ATCC 51908 / MS32).